The following is a 322-amino-acid chain: Ferredoxin--NADP reductase (322 aa).

Residues serine 14, aspartate 33, glutamine 41, tyrosine 46, alanine 86, phenylalanine 120, aspartate 278, and serine 319 each coordinate FAD.

This sequence belongs to the ferredoxin--NADP reductase type 2 family. As to quaternary structure, homodimer. The cofactor is FAD.

The catalysed reaction is 2 reduced [2Fe-2S]-[ferredoxin] + NADP(+) + H(+) = 2 oxidized [2Fe-2S]-[ferredoxin] + NADPH. In Salinispora arenicola (strain CNS-205), this protein is Ferredoxin--NADP reductase.